Here is a 592-residue protein sequence, read N- to C-terminus: MNPYEWLETILFFVVLLALIKPFGTYMAKVFQGERTLLSPVFVPCENLLYRICGVDKDDEMGWKRYACAMLLFNLVFAVSLFAMLLLQGILPLNPQKLPAFSWPLALNTAISFTTNTNWQNYGGEAAASYFTQMFGFAVHNFTSAATGIVIAIAAIRGLVRRKSSALGNFWVDTTRCTLYILLPLSLIAAIFLVSQGVIQNFSPYKTVPLVQATSFEKPRLDAKGTPIKDAKGNPVTESVTVKEVTIPMGPVASQEAIKELGTNGGGFFNANSAHPFENPTPLSNIFEVFLILLISGGLTYTFGRMAGNTRQGWALLAVMLAILILAIGVFYRAESSGNPLVAKLGVHGINMEGKETRFGLAGSALFATATTGTSCGAVNTMHDSLTPIGGMVPLSLILLSEVIFGGVGTGLYTMLAFVVIAVFVAGLMIGRTPEYLGKKIEVREMWMSITTVLASGILVLIFSGIAMILPAGVSSMNNSGAHGLSEVLYAFASMSNNNGSAFAGLNGNTLFYNLTGAVAMLLGRFVPAVAVLAMAGGLAEKKYVPPSLGTLPTDQAPFALWLTLVILIVGALTFFPALAMGPIAEQLIMMR.

Transmembrane regions (helical) follow at residues 6-26 (WLET…FGTY), 67-87 (ACAM…MLLL), 136-156 (GFAV…IAAI), 179-199 (LYIL…QGVI), 283-303 (LSNI…TYTF), 312-332 (QGWA…GVFY), 359-379 (FGLA…CGAV), 389-409 (IGGM…GGVG), 411-431 (GLYT…LMIG), 450-470 (ITTV…AMIL), 489-511 (LYAF…GNTL), 519-539 (VAML…AGGL), and 559-579 (FALW…FPAL).

This sequence belongs to the KdpA family. As to quaternary structure, the system is composed of three essential subunits: KdpA, KdpB and KdpC.

The protein resides in the cell inner membrane. Part of the high-affinity ATP-driven potassium transport (or Kdp) system, which catalyzes the hydrolysis of ATP coupled with the electrogenic transport of potassium into the cytoplasm. This subunit binds the periplasmic potassium ions and delivers the ions to the membrane domain of KdpB through an intramembrane tunnel. This chain is Potassium-transporting ATPase potassium-binding subunit, found in Geotalea uraniireducens (strain Rf4) (Geobacter uraniireducens).